Consider the following 363-residue polypeptide: Aminomethyltransferase (363 aa).

The protein belongs to the GcvT family. As to quaternary structure, the glycine cleavage system is composed of four proteins: P, T, L and H.

It carries out the reaction N(6)-[(R)-S(8)-aminomethyldihydrolipoyl]-L-lysyl-[protein] + (6S)-5,6,7,8-tetrahydrofolate = N(6)-[(R)-dihydrolipoyl]-L-lysyl-[protein] + (6R)-5,10-methylene-5,6,7,8-tetrahydrofolate + NH4(+). The glycine cleavage system catalyzes the degradation of glycine. This Picosynechococcus sp. (strain ATCC 27264 / PCC 7002 / PR-6) (Agmenellum quadruplicatum) protein is Aminomethyltransferase.